The following is a 364-amino-acid chain: Aspartate aminotransferase (364 aa).

Residues glycine 23, tryptophan 99, and asparagine 143 each contribute to the L-aspartate site. Lysine 200 carries the N6-(pyridoxal phosphate)lysine modification. Arginine 320 is a binding site for L-aspartate.

Belongs to the class-I pyridoxal-phosphate-dependent aminotransferase family. As to quaternary structure, homodimer. Pyridoxal 5'-phosphate is required as a cofactor.

Its subcellular location is the cytoplasm. It catalyses the reaction L-aspartate + 2-oxoglutarate = oxaloacetate + L-glutamate. This chain is Aspartate aminotransferase (aspC), found in Thermococcus kodakarensis (strain ATCC BAA-918 / JCM 12380 / KOD1) (Pyrococcus kodakaraensis (strain KOD1)).